The following is a 103-amino-acid chain: Large ribosomal subunit protein bL21 (103 aa).

Belongs to the bacterial ribosomal protein bL21 family. As to quaternary structure, part of the 50S ribosomal subunit. Contacts protein L20.

Its function is as follows. This protein binds to 23S rRNA in the presence of protein L20. The chain is Large ribosomal subunit protein bL21 from Clostridium beijerinckii (strain ATCC 51743 / NCIMB 8052) (Clostridium acetobutylicum).